The following is a 1010-amino-acid chain: Glycine--tRNA ligase (1010 aa).

The segment at 1–312 is glycine--tRNA ligase alpha subunit; that stretch reads MSEHPLTLQS…TSESVVPMIS (312 aa). A glycine--tRNA ligase beta subunit region spans residues 313–1010; that stretch reads STEDLLLEIG…SLCHWESVAV (698 aa).

The protein belongs to the class-II aminoacyl-tRNA synthetase family.

The protein resides in the cytoplasm. The catalysed reaction is tRNA(Gly) + glycine + ATP = glycyl-tRNA(Gly) + AMP + diphosphate. This chain is Glycine--tRNA ligase (glyQS), found in Chlamydia pneumoniae (Chlamydophila pneumoniae).